The primary structure comprises 333 residues: tRNA N6-adenosine threonylcarbamoyltransferase (333 aa).

The Fe cation site is built by histidine 111 and histidine 115. Substrate contacts are provided by residues 134-138 (VVSGG), aspartate 167, glycine 180, aspartate 184, and asparagine 269. Aspartate 297 contributes to the Fe cation binding site.

It belongs to the KAE1 / TsaD family. The cofactor is Fe(2+).

It localises to the cytoplasm. It catalyses the reaction L-threonylcarbamoyladenylate + adenosine(37) in tRNA = N(6)-L-threonylcarbamoyladenosine(37) in tRNA + AMP + H(+). In terms of biological role, required for the formation of a threonylcarbamoyl group on adenosine at position 37 (t(6)A37) in tRNAs that read codons beginning with adenine. Is involved in the transfer of the threonylcarbamoyl moiety of threonylcarbamoyl-AMP (TC-AMP) to the N6 group of A37, together with TsaE and TsaB. TsaD likely plays a direct catalytic role in this reaction. The protein is tRNA N6-adenosine threonylcarbamoyltransferase of Carboxydothermus hydrogenoformans (strain ATCC BAA-161 / DSM 6008 / Z-2901).